A 109-amino-acid chain; its full sequence is MMRGGMGNMNNMMKQMQKMQKQMAKAQEELGEKQVEGTAGGGMVTVIANGHKQILDVKMKEEVVDPEDIEMLQDLVLAATNDALKKAEELSNATMGQFTKGLNLPGGLF.

This sequence belongs to the YbaB/EbfC family. As to quaternary structure, homodimer.

It is found in the cytoplasm. The protein localises to the nucleoid. Functionally, binds to DNA and alters its conformation. May be involved in regulation of gene expression, nucleoid organization and DNA protection. This chain is Nucleoid-associated protein Bcer98_0019, found in Bacillus cytotoxicus (strain DSM 22905 / CIP 110041 / 391-98 / NVH 391-98).